Consider the following 196-residue polypeptide: MAALLMPRRNKGMRTRLGCLSHKSDSCSDFTAILPDKPNRALNYLRMYKFTATELQESRRLSTEEATRWADSFDVLLSHKYGVAAFRAFLKTEFSEENLEFWLACEEFKKTRSTAKLVSKAHRIFEEFVDVQAPREVNIDFQTREATRKNMQEPSLTCFDQAQGKVHSLMEKDSYPRFLRSKMYLDLLSQSQRRLS.

Ser26 carries the post-translational modification Phosphoserine. The region spanning 72–188 (SFDVLLSHKY…LRSKMYLDLL (117 aa)) is the RGS domain.

In terms of assembly, interacts with GNAO1 and GNAI3.

The protein localises to the cell membrane. Its subcellular location is the membrane. The protein resides in the perikaryon. It is found in the cell projection. It localises to the dendrite. The protein localises to the nucleus. In terms of biological role, regulates G protein-coupled receptor signaling cascades, including signaling via muscarinic acetylcholine receptor CHRM2 and dopamine receptor DRD2. Inhibits signal transduction by increasing the GTPase activity of G protein alpha subunits, thereby driving them into their inactive GDP-bound form. Modulates the activity of potassium channels that are activated in response to DRD2 and CHRM2 signaling. This chain is Regulator of G-protein signaling 8 (RGS8), found in Macaca fascicularis (Crab-eating macaque).